Reading from the N-terminus, the 145-residue chain is Deoxyuridine 5'-triphosphate nucleotidohydrolase (145 aa).

Residues 63 to 65, glutamine 76, and 80 to 82 contribute to the substrate site; these read RSG and TVD.

This sequence belongs to the dUTPase family. The cofactor is Mg(2+).

The catalysed reaction is dUTP + H2O = dUMP + diphosphate + H(+). Its pathway is pyrimidine metabolism; dUMP biosynthesis; dUMP from dCTP (dUTP route): step 2/2. Functionally, this enzyme is involved in nucleotide metabolism: it produces dUMP, the immediate precursor of thymidine nucleotides and it decreases the intracellular concentration of dUTP so that uracil cannot be incorporated into DNA. This Chlamydia muridarum (strain MoPn / Nigg) protein is Deoxyuridine 5'-triphosphate nucleotidohydrolase.